Reading from the N-terminus, the 136-residue chain is Ribonuclease VapC47 (136 aa).

The 103-residue stretch at 2 to 104 (IYMDTSALTK…AIHLAAAAQI (103 aa)) folds into the PINc domain. Mg(2+)-binding residues include aspartate 5 and aspartate 94.

Belongs to the PINc/VapC protein family. Mg(2+) is required as a cofactor.

Functionally, toxic component of a type II toxin-antitoxin (TA) system. An RNase. Its toxic effect on colony formation is neutralized by coexpression with cognate antitoxin VapB47. This chain is Ribonuclease VapC47, found in Mycobacterium tuberculosis (strain CDC 1551 / Oshkosh).